The sequence spans 1181 residues: DNA-directed RNA polymerase subunit beta' (1181 aa).

Cys68, Cys70, Cys83, and Cys86 together coordinate Zn(2+). Residues Asp457, Asp459, and Asp461 each coordinate Mg(2+). Zn(2+)-binding residues include Cys802, Cys876, Cys883, and Cys886.

Belongs to the RNA polymerase beta' chain family. The RNAP catalytic core consists of 2 alpha, 1 beta, 1 beta' and 1 omega subunit. When a sigma factor is associated with the core the holoenzyme is formed, which can initiate transcription. Requires Mg(2+) as cofactor. It depends on Zn(2+) as a cofactor.

It catalyses the reaction RNA(n) + a ribonucleoside 5'-triphosphate = RNA(n+1) + diphosphate. Functionally, DNA-dependent RNA polymerase catalyzes the transcription of DNA into RNA using the four ribonucleoside triphosphates as substrates. This chain is DNA-directed RNA polymerase subunit beta', found in Syntrophomonas wolfei subsp. wolfei (strain DSM 2245B / Goettingen).